A 216-amino-acid chain; its full sequence is Protein Syd (216 aa).

This sequence belongs to the Syd family.

Its subcellular location is the cell inner membrane. Functionally, interacts with the SecY protein in vivo. May bind preferentially to an uncomplexed state of SecY, thus functioning either as a chelating agent for excess SecY in the cell or as a regulatory factor that negatively controls the translocase function. The protein is Protein Syd of Shewanella baltica (strain OS223).